The primary structure comprises 322 residues: Phospho-N-acetylmuramoyl-pentapeptide-transferase (322 aa).

10 helical membrane-spanning segments follow: residues Ile-9–Met-29, Thr-54–Trp-74, Val-82–Ile-102, Ile-122–Tyr-142, Phe-145–Gly-165, Leu-176–Phe-196, Asn-200–Phe-220, Ile-227–Met-247, Leu-255–Phe-275, and Val-302–Gly-322.

Belongs to the glycosyltransferase 4 family. MraY subfamily. Mg(2+) is required as a cofactor.

Its subcellular location is the cell membrane. The catalysed reaction is UDP-N-acetyl-alpha-D-muramoyl-L-alanyl-gamma-D-glutamyl-L-lysyl-D-alanyl-D-alanine + di-trans,octa-cis-undecaprenyl phosphate = Mur2Ac(oyl-L-Ala-gamma-D-Glu-L-Lys-D-Ala-D-Ala)-di-trans,octa-cis-undecaprenyl diphosphate + UMP. It participates in cell wall biogenesis; peptidoglycan biosynthesis. Its function is as follows. Catalyzes the initial step of the lipid cycle reactions in the biosynthesis of the cell wall peptidoglycan: transfers peptidoglycan precursor phospho-MurNAc-pentapeptide from UDP-MurNAc-pentapeptide onto the lipid carrier undecaprenyl phosphate, yielding undecaprenyl-pyrophosphoryl-MurNAc-pentapeptide, known as lipid I. This Lactobacillus acidophilus (strain ATCC 700396 / NCK56 / N2 / NCFM) protein is Phospho-N-acetylmuramoyl-pentapeptide-transferase.